The chain runs to 313 residues: Probable WRKY transcription factor 41 (313 aa).

The segment at residues 135–203 (GLEGPHDDIF…YRGTHTCSQG (69 aa)) is a DNA-binding region (WRKY).

The protein belongs to the WRKY group III family.

The protein localises to the nucleus. Transcription factor. Interacts specifically with the W box (5'-(T)TGAC[CT]-3'), a frequently occurring elicitor-responsive cis-acting element. This chain is Probable WRKY transcription factor 41 (WRKY41), found in Arabidopsis thaliana (Mouse-ear cress).